Consider the following 434-residue polypeptide: Nicotinate phosphoribosyltransferase (434 aa).

Phosphohistidine; by autocatalysis is present on histidine 242.

Belongs to the NAPRTase family. In terms of processing, transiently phosphorylated on a His residue during the reaction cycle. Phosphorylation strongly increases the affinity for substrates and increases the rate of nicotinate D-ribonucleotide production. Dephosphorylation regenerates the low-affinity form of the enzyme, leading to product release.

It catalyses the reaction nicotinate + 5-phospho-alpha-D-ribose 1-diphosphate + ATP + H2O = nicotinate beta-D-ribonucleotide + ADP + phosphate + diphosphate. The protein operates within cofactor biosynthesis; NAD(+) biosynthesis; nicotinate D-ribonucleotide from nicotinate: step 1/1. Its function is as follows. Catalyzes the synthesis of beta-nicotinate D-ribonucleotide from nicotinate and 5-phospho-D-ribose 1-phosphate at the expense of ATP. The polypeptide is Nicotinate phosphoribosyltransferase (Brucella canis (strain ATCC 23365 / NCTC 10854 / RM-666)).